The sequence spans 65 residues: Small vasohibin-binding protein (65 aa).

Over residues 1 to 22 the composition is skewed to basic and acidic residues; it reads MEPACRKDKQKQQTPTRGDRTK. The interval 1–30 is disordered; the sequence is MEPACRKDKQKQQTPTRGDRTKQKTAQQEL. The stretch at 31–51 forms a coiled coil; sequence KQRQRAEIYALNKVMTELEQQ.

This sequence belongs to the SVBP family.

Its subcellular location is the cytoplasm. The protein resides in the secreted. It localises to the cytoskeleton. Its function is as follows. Enhances the tyrosine carboxypeptidase activity of vash1 and vash2, thereby promoting the removal of the C-terminal tyrosine residue of alpha-tubulin. Also required to enhance the solubility and secretion of vash1 and vash2. May play a role in axon and excitatory synapse formation. This is Small vasohibin-binding protein from Danio rerio (Zebrafish).